Reading from the N-terminus, the 522-residue chain is Vicilin-like seed storage protein At4g36700 (522 aa).

An N-terminal signal peptide occupies residues 1 to 25 (MTRFAVLPLSVLLLVLLFLCTESLA). Residues Asn206, Asn303, Asn341, Asn374, and Asn414 are each glycosylated (N-linked (GlcNAc...) asparagine). A Cupin type-1 domain is found at 265–421 (FNVFESEPDF…SLNVSSVTID (157 aa)). The disordered stretch occupies residues 457 to 522 (DERKRRHDER…EWEMEGEEES (66 aa)). Composition is skewed to basic and acidic residues over residues 466 to 491 (RKKEEEEAKREEEERRKREEEEEKKR) and 501 to 515 (EELRERQLPMEKEWE).

Belongs to the 7S seed storage protein family.

In terms of biological role, seed storage protein. This chain is Vicilin-like seed storage protein At4g36700, found in Arabidopsis thaliana (Mouse-ear cress).